A 101-amino-acid polypeptide reads, in one-letter code: Omega-scoloptoxin(10)-Ssd1b (101 aa).

A signal peptide spans 1-23; sequence MNKLTIIFFTILLLTYIIVEKEA.

In terms of processing, contains 3 disulfide bonds. In terms of tissue distribution, expressed by the venom gland.

It localises to the secreted. Functionally, voltage-gated calcium channel inhibitor. This Scolopendra dehaani (Thai centipede) protein is Omega-scoloptoxin(10)-Ssd1b.